A 457-amino-acid chain; its full sequence is Keratin, type II cytoskeletal 7 (457 aa).

Ser2 is subject to N-acetylserine. Ser2 carries the post-translational modification Phosphoserine. The segment at 2–84 (SIHFSSRSTA…DPTIQQVRQE (83 aa)) is head. Ser7 carries O-linked (GlcNAc) serine glycosylation. Arg15 bears the Dimethylated arginine; alternate mark. The residue at position 15 (Arg15) is an Omega-N-methylarginine; alternate. 2 positions are modified to phosphoserine: Ser47 and Ser65. A coil 1A region spans residues 84-120 (EEREQIKTLNNKFASFIDKVRFLEQQNKMLETKWALL). In terms of domain architecture, IF rod spans 85 to 397 (EREQIKTLNN…KLLEGEESRL (313 aa)). Thr91 bears the Phosphothreonine mark. The segment at 121-138 (QEQKSAKSSQLPRIFEAQ) is linker 1. Lys124 participates in a covalent cross-link: Glycyl lysine isopeptide (Lys-Gly) (interchain with G-Cter in SUMO2). The tract at residues 139-230 (IAGLRQQLET…TLHETELAEL (92 aa)) is coil 1B. Residue Lys173 is modified to N6-acetyllysine. 3 positions are modified to phosphoserine: Ser211, Ser246, and Ser248. Positions 231–254 (QSQISDTSVVLSMDNSRSLDLDGI) are linker 12. Residues 255-393 (IADVKAQYEE…ATYRKLLEGE (139 aa)) form a coil 2 region. Residues Lys259 and Lys280 each participate in a glycyl lysine isopeptide (Lys-Gly) (interchain with G-Cter in SUMO2) cross-link. Thr283 bears the Phosphothreonine mark. Residues Lys290 and Lys325 each participate in a glycyl lysine isopeptide (Lys-Gly) (interchain with G-Cter in SUMO2) cross-link. Residues 394 to 457 (ESRLSGDGMG…TSTTRRGTHN (64 aa)) are tail.

This sequence belongs to the intermediate filament family. Heterotetramer of two type I and two type II keratins. Interacts with eukaryotic translation initiator factor 3 (eIF3) subunit EIF3S10. Interacts with GPER1. Arg-15 is dimethylated, probably to asymmetric dimethylarginine. In terms of tissue distribution, expressed in most simple epithelia tested including liver, lactating mammary gland, lung, kidney, stomach, duodenum, colon, oviduct, uterus, pancreas, epididymis, prostate, preputial gland and mesothelium, and in most stratified epithelia tested including dorsal skin, paw/toe, tail, tongue, cervix, forestomach, and bladder. Also expressed in Henle layer of the inner root sheath of whisker follicle.

Its function is as follows. Blocks interferon-dependent interphase and stimulates DNA synthesis in cells. The polypeptide is Keratin, type II cytoskeletal 7 (Mus musculus (Mouse)).